A 275-amino-acid polypeptide reads, in one-letter code: Large ribosomal subunit protein uL2 (275 aa).

The segment covering 35–49 has biased composition (polar residues); sequence DSQSSTAGRNNNGRI. 2 disordered regions span residues 35–59 and 224–275; these read DSQS…GGHK and AMNP…RHKR. Positions 50–59 are enriched in basic residues; sequence TTRHKGGGHK.

Belongs to the universal ribosomal protein uL2 family. Part of the 50S ribosomal subunit. Forms a bridge to the 30S subunit in the 70S ribosome.

Its function is as follows. One of the primary rRNA binding proteins. Required for association of the 30S and 50S subunits to form the 70S ribosome, for tRNA binding and peptide bond formation. It has been suggested to have peptidyltransferase activity; this is somewhat controversial. Makes several contacts with the 16S rRNA in the 70S ribosome. This Burkholderia orbicola (strain AU 1054) protein is Large ribosomal subunit protein uL2.